The following is a 771-amino-acid chain: UPF0313 protein PSPTO_4928 (771 aa).

The Radical SAM core domain occupies 371-649 (AYDMIRFSVN…KAFLRYHDPK (279 aa)). [4Fe-4S] cluster contacts are provided by cysteine 385, cysteine 389, and cysteine 392. The tract at residues 683–771 (DTYQSARRKN…KPARKPVVPR (89 aa)) is disordered. 2 stretches are compositionally biased toward basic and acidic residues: residues 726-735 (KPWDKREEAK) and 745-754 (AAKERMDAAK). The segment covering 756-765 (GKGKGGKPAR) has biased composition (basic residues).

Belongs to the UPF0313 family. Requires [4Fe-4S] cluster as cofactor.

The chain is UPF0313 protein PSPTO_4928 from Pseudomonas syringae pv. tomato (strain ATCC BAA-871 / DC3000).